Here is a 976-residue protein sequence, read N- to C-terminus: Protein PLASTID MOVEMENT IMPAIRED 1-RELATED 2 (976 aa).

Residues 81–229 (IAHFGQRRFD…VLNLSFDYSV (149 aa)) enclose the C2 NT-type domain. Basic and acidic residues predominate over residues 309 to 319 (KQAADSDDSGK). Disordered stretches follow at residues 309 to 343 (KQAADSDDSGKGVETFQQERSGLEESNDPNTESSR) and 381 to 419 (NLLPKHSVDGTPKSTFSSQVISESSESKSPSAMDDSTEK). The segment covering 394-414 (STFSSQVISESSESKSPSAMD) has biased composition (low complexity).

Its function is as follows. Seems not necessary for chloroplast and nuclear photorelocation movements. The chain is Protein PLASTID MOVEMENT IMPAIRED 1-RELATED 2 from Arabidopsis thaliana (Mouse-ear cress).